The chain runs to 712 residues: MATPAAVNPPEMASDIPGSVALPVAPMAATGQVRMAGAMPARGGKRRSGMDFDDEDGEGPSKFSRENHSEIERRRRNKMTQYITELSDMVPTCSALARKPDKLTILRMAVSHMKSMRGTGNKSTDGAYKPSFLTEQELKHLILEAADGFLFVVAAETGRVIYVSDSVTPVLNQPQSEWFGSTLYEQVHPDDVEKLREQLCTSENSMTGRILDLKTGTVKKEGQQSSMRMCMGSRRSFICRMRCGNAPLDHLPLNRITTMRKRFRNGLGPVKEGEAQYAVVHCTGYIKAWPPAGMTIPEEDADVGQGSKYCLVAIGRLQVTSSPVCMDMSGMSVPTEFLSRHNSDGIITFVDPRCISVIGYQPQDLLGKDILEFCHPEDQSHLRESFQQVVKLKGQVLSVMYRFRTKNREWLLIRTSSFTFQNPYSDEIEYVICTNTNVKQLQQQQAELEVHQRDGLSSYDLSQVPVPNLPAGVHEAGKSVEKADAIFSQERDPRFAEMFAGISASEKKMMSSASASGSQQIYSQGSPFPAGHSGKAFSSSVVHVPGVNDIQSSSSTGQNISQISRQLNQGQVAWTGSRPPFPGQPSKTQSSAFGIGSSHPYPADPSSYSPLSSPAASSPSGNAYPSLANRTPGFAESGQSGGQFQGRPSEVWSQWQSQHHGQQSGEQHSHQQPGQTEVFQDMLPMPGDPTQGTGNYNIEDFADLGMFPPFSE.

The tract at residues 36 to 73 (AGAMPARGGKRRSGMDFDDEDGEGPSKFSRENHSEIER) is disordered. R42 carries the post-translational modification Omega-N-methylarginine. The span at 63-73 (FSRENHSEIER) shows a compositional bias: basic and acidic residues. The bHLH domain occupies 63-116 (FSRENHSEIERRRRNKMTQYITELSDMVPTCSALARKPDKLTILRMAVSHMKSM). PAS domains are found at residues 134–209 (TEQE…MTGR) and 323–393 (PVCM…VKLK). One can recognise a PAC domain in the interval 398 to 441 (SVMYRFRTKNREWLLIRTSSFTFQNPYSDEIEYVICTNTNVKQL). A disordered region spans residues 573-712 (AWTGSRPPFP…DLGMFPPFSE (140 aa)). Low complexity-rich tracts occupy residues 597 to 626 (SSHPYPADPSSYSPLSSPAASSPSGNAYPS) and 653 to 675 (SQWQSQHHGQQSGEQHSHQQPGQ).

As to quaternary structure, efficient DNA binding requires dimerization with another bHLH protein. Heterodimer with NPAS4 or SIM1. Heterodimer with the aryl hydrocarbon receptor (AHR) or the SIM1 protein. Interacts with TACC3. In terms of tissue distribution, restricted to adult brain and kidney.

The protein resides in the nucleus. In terms of biological role, transcription factor that plays a role in the development of the hypothalamo-pituitary axis, postnatal brain growth, and visual and renal function. Specifically recognizes the xenobiotic response element (XRE). This chain is Aryl hydrocarbon receptor nuclear translocator 2 (Arnt2), found in Mus musculus (Mouse).